The primary structure comprises 120 residues: Chaperonin GroEL (120 aa).

Position 23-27 (23-27 (DGTTT)) interacts with ATP.

Belongs to the chaperonin (HSP60) family. As to quaternary structure, forms a cylinder of 14 subunits composed of two heptameric rings stacked back-to-back. Interacts with the co-chaperonin GroES.

The protein localises to the cytoplasm. The catalysed reaction is ATP + H2O + a folded polypeptide = ADP + phosphate + an unfolded polypeptide.. Together with its co-chaperonin GroES, plays an essential role in assisting protein folding. The GroEL-GroES system forms a nano-cage that allows encapsulation of the non-native substrate proteins and provides a physical environment optimized to promote and accelerate protein folding. In Mycolicibacterium chitae (Mycobacterium chitae), this protein is Chaperonin GroEL.